Consider the following 503-residue polypeptide: Cytochrome P450 3A29 (503 aa).

C442 provides a ligand contact to heme.

This sequence belongs to the cytochrome P450 family. The cofactor is heme.

The protein localises to the endoplasmic reticulum membrane. The protein resides in the microsome membrane. The catalysed reaction is an organic molecule + reduced [NADPH--hemoprotein reductase] + O2 = an alcohol + oxidized [NADPH--hemoprotein reductase] + H2O + H(+). In terms of biological role, cytochromes P450 are a group of heme-thiolate monooxygenases. In liver microsomes, this enzyme is involved in an NADPH-dependent electron transport pathway. It oxidizes a variety of structurally unrelated compounds, including steroids, fatty acids, and xenobiotics. This chain is Cytochrome P450 3A29 (CYP3A29), found in Sus scrofa (Pig).